Reading from the N-terminus, the 406-residue chain is 1H-pyrrole-2-carbonyl-[peptidyl-carrier protein] brominase (406 aa).

The FAD site is built by A17, E36, R42, H44, I45, S48, R101, V124, D291, and V304.

This sequence belongs to the flavin-dependent halogenase family.

It carries out the reaction (1H-pyrrole-2-carbonyl)-[peptidyl-carrier protein] + 3 bromide + 3 FADH2 + 3 O2 = (3,4,5-tribromo-1H-pyrrole-2-carbonyl)-[peptidyl-carrier protein] + 3 FAD + 6 H2O. The enzyme catalyses (1H-pyrrole-2-carbonyl)-[peptidyl-carrier protein] + bromide + FADH2 + O2 = (5-bromo-1H-pyrrole-2-carbonyl)-[peptidyl-carrier protein] + FAD + 2 H2O. It catalyses the reaction (5-bromo-1H-pyrrole-2-carbonyl)-[peptidyl-carrier protein] + bromide + FADH2 + O2 = (4,5-dibromo-1H-pyrrole-2-carbonyl)-[peptidyl-carrier protein] + FAD + 2 H2O. The catalysed reaction is (4,5-dibromo-1H-pyrrole-2-carbonyl)-[peptidyl-carrier protein] + bromide + FADH2 + O2 = (3,4,5-tribromo-1H-pyrrole-2-carbonyl)-[peptidyl-carrier protein] + FAD + 2 H2O. Brominase involved in the biosynthesis of polybrominated aromatic organic compounds. Catalyzes three successive rounds of bromination of pyrrolyl-S-Bmp1 to produce mono-, di- and tribromopyrrolyl-S-Bmp1. This is 1H-pyrrole-2-carbonyl-[peptidyl-carrier protein] brominase from Pseudoalteromonas luteoviolacea (strain 2ta16).